Consider the following 1813-residue polypeptide: MQLPFYVEALASNPKLLMKQHGQHATLSLHAVHIQCSGFMDILDSILKNTDQTIGQAMQLGDRELQQLWKWNASVPQTLDDCIHDIFVEKARRDPSRQAVVSWDGELSYGEVDQFSTLLAIHLIKLGVKFGNHVLLCFEKSMWTVVAVLAVMKSGGTLVLTDPSQPEARLQTIATEVGANLMLTSERQEELGKRILAGGVIVVNHDFFQQIQTSVLPPASTTDLPSVPGSSPLYTIFTSGSTGKPKGVVISHANYTSGALPRAEAVGYGPHSRVLDFPSYAFDVSIDCMLCTLAHGGCVCVPSEDDRVNNLSGAIRNMKVNMAHMTPSVARVLGEDTLSSLEVLGLGGESVSVRDAANWGKLTKVIIAYGPSECTVGCTINNEIALDRAYTSIGKGVGGVTWVVDPTDHSRLMPIGAIGELIIEGPIVGRGYLNDPERTSSVFIEDPMWLLSGCQGYPGRHGRFYKTGDLVKYDPDSSGSIVFVGRGDQQVKLRGQRVELGEVEHHLRTRLPAGNVVAAEVITPGGKGDQPTLVAFIAEKTTTKSQTNKEIATFSTELRHSLEVMDKALGSVLPRYMVPSAYIPLLEMPLLVSCKVDRKKLRSLGSAMSRKELIRHKTFSSQKEPQSERERQLAHLWKCLFGAEAEIDVQSNFFDLGGDSLMAMKLVAAARAENLLTSVADIFRHPTLAELAITLKHSDSEAEIDVPPFSLLDSHWKENNARIETAKLCGIDATSVMDVYPCTTLQEGLMALSAKVSEAYVAQRVVELADFQTAQRLQRAFETAAADSPILRTRIVQVPGRGLMQVVLKDGITWRAGTTLEEYLVKDRNESMGLGTPLARFAITSNETTGKVHFVLTIHHALYDGWSMPLVVRRVNRAFNNQESERSVAFNSFIKHLSGLNHKDSEIYWKEQLQGANGLQFPALPRAGYQTQAQSLLEQYFPLGKTSASSTSIATSIRAAWALVAGKYTLSDDVVFGETLTGRNAPVVGIEKIEGPMITTVPVRVRFDRNARVSEYLRRIHDDSILRIPHEHMGLQHIRRLSPDAREACELRTGIVIHPTTTEDGKNLTGDGPANGFVPAGDEDAAREALKFNTYALMLVCSLDPKGFLVMASFDSATIDVCQMDKVLGQFGQTVQQLCENGNALVSDLLPMTDDELAEIWRFSNTYKPNSGNEVVLGHDYSHATATWIVAPEDSEQLVPLGGIGELVIEGDFPTNTSIQISGTKWLSAGHRDIPGRQATLHKTGQLAKYNSDGSLVILGGKGGNIKSDMEIKKPEAKSRSQVTTPKQQKLRKLWARVLGISEDEVGSNDSFFDLGGDSISAMKLVSEGRMENLELVVMQVFQHRRFHDMADIAKESLPLQVSTKQYSPFSTLDVSDVDTFISESIRPSLLNSSWKVVDVLPARPLQEIAVDGTINLPRYSARYELFYLDAAVDQSHLLKSCQELISRNEILRTIFVKSGGSCFGVVIEELQLPLDEYQIDGDLTAFAEQLCGLDIQTVMSLGSPFIKFFVVQSSSGLSCLIMRISHAQYDEICLPILLRQLSALYEGELVPAGLPFSSFVHHIVRNNIPQSIEYWRRLLQGSSMSVLRPSTPLISKKSIFISKTFDISSRSKEITLATLPTAAWALCLARRLSLRDVTFGEVVSGRNIDFANCDTVVGPTWQYIPVRVKFKSGWTVIDLLNFVQHQHISSTPFEGIGLKEIVRKCTDWPETTEWFDSVVHQDVEHVESLRFLSANSRMDTIYPHLEPLREWKIQAFPKGDSLCIEIVTFESWRAEADSILNEMGDIISLLVTKPNSTLFQTDVMEESTPPTS.

The tract at residues glutamate 89 to arginine 494 is adenylation. A Carrier 1 domain is found at glutamate 624–aspartate 699. Serine 660 bears the O-(pantetheine 4'-phosphoryl)serine mark. The interval aspartate 738–glutamate 1159 is condensation 1. The Carrier 2 domain maps to glutamine 1282–leucine 1358. Serine 1319 is modified (O-(pantetheine 4'-phosphoryl)serine). A condensation 2 region spans residues phenylalanine 1427–glutamate 1806.

The protein belongs to the NRP synthetase family.

It functions in the pathway siderophore biosynthesis. Nonribosomal peptide synthetase; part of the gene cluster that mediates the biosynthesis of hydroxamate-containing siderophores that play a critical role in virulence via intracellular iron acquisition during macrophage infection. This Ajellomyces capsulatus (Darling's disease fungus) protein is Nonribosomal peptide synthetase 1.